The sequence spans 345 residues: UPF0324 membrane protein RB0971 (345 aa).

Transmembrane regions (helical) follow at residues 13–32, 42–61, 93–115, 130–152, 161–183, 193–215, 228–247, 262–284, 291–310, and 320–342; these read SLSVVLSTYGPGLLVTAAVA, YGAPAMLMALLLGIAFHFLA, LLIGLGGGTILLLVSAIVATILF, ALLTSGAVAICGASAAMAIAAVL, NLIFTVLSVTVLSTLAMIGYPIV, ATGIFFGGTIHDVAQVVGAGFSV, LIRVTMLAPVVLIFSLVLRS, VPGFVLAFLVLAGFNSAGLVPVL, AISRWALLAGIVAVGMKTSL, and AVALVVAETLFIAVFILAGMYYL.

This sequence belongs to the UPF0324 family.

It localises to the cell membrane. This is UPF0324 membrane protein RB0971 from Rhizobium meliloti (strain 1021) (Ensifer meliloti).